The following is a 549-amino-acid chain: MKLALALSLIASVAAAPTAKLANGDTITGLNAIINEAFLGIPFAEPPVGNLRFKDPVPYSGSLNGQKFTSYGPSCMQQNPEGTFEENLGKTALDLVMQSKVFQAVLPQSEDCLTINVVRPPGTKAGANLPVMLWIFGGGFEIGSPTIFPPAQMVTKSVLMGKPIIHVAVNYRVASWGFLAGDDIKAEGSGNAGLKDQRLGMQWVADNIAGFGGDPSKVTIFGESAGSMSVLCHLIWNDGDNTYKGKPLFRAGIMQSGAMVPSDPVDGTYGNEIYDLFVSSAGCGSASDKLACLRSASSDTLLDATNNTPGFLAYSSLRLSYLPRPDGKNITDDMYKLVRDGKYASVPVIIGDQNDEGTIFGLSSLNVTTNAQARAYFKQSFIHASDAEIDTLMAAYPQDITQGSPFDTGIFNAITPQFKRISAVLGDLAFIHARRYFLNHFQGGTKYSFLSKQLSGLPIMGTFHANDIVWQDYLLGSGSVIYNNAFIAFATDLDPNTAGLLVNWPKYTSSSQSGNNLMMINALGLYTGKDNFRTAGYDALMTNPSSFFV.

The N-terminal stretch at 1–15 is a signal peptide; the sequence is MKLALALSLIASVAA. A disulfide bridge connects residues Cys75 and Cys112. Residue Ser224 is the Acyl-ester intermediate of the active site. An intrachain disulfide couples Cys283 to Cys292. The N-linked (GlcNAc...) asparagine glycan is linked to Asn329. The active-site Charge relay system is Glu356. Residue Asn366 is glycosylated (N-linked (GlcNAc...) asparagine). His464 acts as the Charge relay system in catalysis.

The protein belongs to the type-B carboxylesterase/lipase family. As to quaternary structure, monomer and homodimer.

It catalyses the reaction a triacylglycerol + H2O = a diacylglycerol + a fatty acid + H(+). In Diutina rugosa (Yeast), this protein is Lipase 3 (LIP3).